The chain runs to 421 residues: UDP-N-acetylglucosamine 1-carboxyvinyltransferase (421 aa).

22–23 (KN) provides a ligand contact to phosphoenolpyruvate. Arginine 92 provides a ligand contact to UDP-N-acetyl-alpha-D-glucosamine. The active-site Proton donor is cysteine 116. Cysteine 116 bears the 2-(S-cysteinyl)pyruvic acid O-phosphothioketal mark. UDP-N-acetyl-alpha-D-glucosamine-binding positions include 121-125 (RPVDQ), aspartate 304, and isoleucine 326.

This sequence belongs to the EPSP synthase family. MurA subfamily.

It localises to the cytoplasm. The catalysed reaction is phosphoenolpyruvate + UDP-N-acetyl-alpha-D-glucosamine = UDP-N-acetyl-3-O-(1-carboxyvinyl)-alpha-D-glucosamine + phosphate. It functions in the pathway cell wall biogenesis; peptidoglycan biosynthesis. In terms of biological role, cell wall formation. Adds enolpyruvyl to UDP-N-acetylglucosamine. This is UDP-N-acetylglucosamine 1-carboxyvinyltransferase from Bordetella avium (strain 197N).